Here is a 302-residue protein sequence, read N- to C-terminus: HPr kinase/phosphorylase (302 aa).

Active-site residues include histidine 136 and lysine 157. ATP is bound at residue 151 to 158 (GESGIGKS). Serine 158 provides a ligand contact to Mg(2+). Catalysis depends on aspartate 175, which acts as the Proton acceptor; for phosphorylation activity. Proton donor; for dephosphorylation activity. Residues 198-207 (LEVRGLGIID) are important for the catalytic mechanism of both phosphorylation and dephosphorylation. Glutamate 199 contributes to the Mg(2+) binding site. Residue arginine 240 is part of the active site. The interval 261–266 (PIRPGR) is important for the catalytic mechanism of dephosphorylation.

This sequence belongs to the HPrK/P family. As to quaternary structure, homohexamer. It depends on Mg(2+) as a cofactor.

It carries out the reaction [HPr protein]-L-serine + ATP = [HPr protein]-O-phospho-L-serine + ADP + H(+). It catalyses the reaction [HPr protein]-O-phospho-L-serine + phosphate + H(+) = [HPr protein]-L-serine + diphosphate. In terms of biological role, catalyzes the ATP- as well as the pyrophosphate-dependent phosphorylation of a specific serine residue in HPr, a phosphocarrier protein of the phosphoenolpyruvate-dependent sugar phosphotransferase system (PTS). HprK/P also catalyzes the pyrophosphate-producing, inorganic phosphate-dependent dephosphorylation (phosphorolysis) of seryl-phosphorylated HPr (P-Ser-HPr). The two antagonistic activities of HprK/P are regulated by several intracellular metabolites, which change their concentration in response to the absence or presence of rapidly metabolisable carbon sources (glucose, fructose, etc.) in the growth medium. Therefore, by controlling the phosphorylation state of HPr, HPrK/P is a sensor enzyme that plays a major role in the regulation of carbon metabolism and sugar transport: it mediates carbon catabolite repression (CCR), and regulates PTS-catalyzed carbohydrate uptake and inducer exclusion. The sequence is that of HPr kinase/phosphorylase from Clostridium beijerinckii (strain ATCC 51743 / NCIMB 8052) (Clostridium acetobutylicum).